Here is a 379-residue protein sequence, read N- to C-terminus: Protein RecA (379 aa).

An ATP-binding site is contributed by 79–86; the sequence is GPESSGKT.

The protein belongs to the RecA family.

Its subcellular location is the cytoplasm. Can catalyze the hydrolysis of ATP in the presence of single-stranded DNA, the ATP-dependent uptake of single-stranded DNA by duplex DNA, and the ATP-dependent hybridization of homologous single-stranded DNAs. It interacts with LexA causing its activation and leading to its autocatalytic cleavage. The chain is Protein RecA from Streptococcus agalactiae.